Reading from the N-terminus, the 473-residue chain is Photosystem II CP43 reaction center protein (473 aa).

Residues 1 to 14 (MKILYSPRRFYPVE) constitute a propeptide that is removed on maturation. Residue threonine 15 is modified to N-acetylthreonine. A Phosphothreonine modification is found at threonine 15. 5 helical membrane passes run 69–93 (LFEV…PHLA), 134–155 (LIGP…KDKN), 178–200 (KALY…REIT), 255–275 (KPFA…LSYS), and 291–312 (WFNN…ASQA). Glutamate 367 provides a ligand contact to [CaMn4O5] cluster. A helical transmembrane segment spans residues 447-471 (RARAAAAGFEKGIDRDTEPVLSMTP).

The protein belongs to the PsbB/PsbC family. PsbC subfamily. In terms of assembly, PSII is composed of 1 copy each of membrane proteins PsbA, PsbB, PsbC, PsbD, PsbE, PsbF, PsbH, PsbI, PsbJ, PsbK, PsbL, PsbM, PsbT, PsbX, PsbY, PsbZ, Psb30/Ycf12, at least 3 peripheral proteins of the oxygen-evolving complex and a large number of cofactors. It forms dimeric complexes. The cofactor is Binds multiple chlorophylls and provides some of the ligands for the Ca-4Mn-5O cluster of the oxygen-evolving complex. It may also provide a ligand for a Cl- that is required for oxygen evolution. PSII binds additional chlorophylls, carotenoids and specific lipids..

The protein resides in the plastid. It localises to the chloroplast thylakoid membrane. Functionally, one of the components of the core complex of photosystem II (PSII). It binds chlorophyll and helps catalyze the primary light-induced photochemical processes of PSII. PSII is a light-driven water:plastoquinone oxidoreductase, using light energy to abstract electrons from H(2)O, generating O(2) and a proton gradient subsequently used for ATP formation. This is Photosystem II CP43 reaction center protein from Adiantum capillus-veneris (Maidenhair fern).